Consider the following 119-residue polypeptide: FAD-linked sulfhydryl oxidase (119 aa).

The region spanning 1–97 (MLHWGPKFWR…ISWSEYKNIY (97 aa)) is the ERV/ALR sulfhydryl oxidase domain. Cysteine 44 and cysteine 47 are oxidised to a cystine.

It belongs to the asfivirus B119L family. As to quaternary structure, interacts with A151R. The cofactor is FAD.

It is found in the host cytoplasm. Its subcellular location is the virion. The catalysed reaction is 2 R'C(R)SH + O2 = R'C(R)S-S(R)CR' + H2O2. Its function is as follows. FAD-dependent sulfhydryl oxidase that catalyzes the formation of disulfide bonds in viral proteins produced in the cell cytoplasm. In Ornithodoros (relapsing fever ticks), this protein is FAD-linked sulfhydryl oxidase.